Reading from the N-terminus, the 407-residue chain is Peptidase T (407 aa).

Residue His81 participates in Zn(2+) binding. Asp83 is an active-site residue. Asp142 serves as a coordination point for Zn(2+). Glu176 serves as the catalytic Proton acceptor. 3 residues coordinate Zn(2+): Glu177, Asp199, and His381.

The protein belongs to the peptidase M20B family. Zn(2+) serves as cofactor.

The protein localises to the cytoplasm. The catalysed reaction is Release of the N-terminal residue from a tripeptide.. Cleaves the N-terminal amino acid of tripeptides. This is Peptidase T from Streptococcus pneumoniae (strain Taiwan19F-14).